Here is a 776-residue protein sequence, read N- to C-terminus: Protein translocase subunit SecA 2 (776 aa).

Residues Gln-80, 98–102 (GEGKT), and Asp-486 each bind ATP.

The protein belongs to the SecA family. As to quaternary structure, monomer and homodimer. Part of the essential Sec protein translocation apparatus which comprises SecA, SecYEG and auxiliary proteins SecDF. Other proteins may also be involved.

The protein resides in the cell membrane. It is found in the cytoplasm. It catalyses the reaction ATP + H2O + cellular proteinSide 1 = ADP + phosphate + cellular proteinSide 2.. Part of the Sec protein translocase complex. Interacts with the SecYEG preprotein conducting channel. Has a central role in coupling the hydrolysis of ATP to the transfer of proteins into and across the cell membrane, serving as an ATP-driven molecular motor driving the stepwise translocation of polypeptide chains across the membrane. The polypeptide is Protein translocase subunit SecA 2 (Listeria monocytogenes serovar 1/2a (strain ATCC BAA-679 / EGD-e)).